The following is a 172-amino-acid chain: S-ribosylhomocysteine lyase (172 aa).

Positions 54, 58, and 128 each coordinate Fe cation.

Belongs to the LuxS family. As to quaternary structure, homodimer. Fe cation serves as cofactor.

It catalyses the reaction S-(5-deoxy-D-ribos-5-yl)-L-homocysteine = (S)-4,5-dihydroxypentane-2,3-dione + L-homocysteine. Functionally, involved in the synthesis of autoinducer 2 (AI-2) which is secreted by bacteria and is used to communicate both the cell density and the metabolic potential of the environment. The regulation of gene expression in response to changes in cell density is called quorum sensing. Catalyzes the transformation of S-ribosylhomocysteine (RHC) to homocysteine (HC) and 4,5-dihydroxy-2,3-pentadione (DPD). In Aliivibrio fischeri (strain MJ11) (Vibrio fischeri), this protein is S-ribosylhomocysteine lyase.